The sequence spans 435 residues: MSDSEGGLASEVEHEKRSRSTSNRPNYAIDTEDLDIDENDENEDDDYREEEANEGVNEEEISDEEEQINKSGRNKRRHVDEEEDLSEDKGVTRSRNRSKFKKPVFPGIDDAEENLNPLKVVNEEYVLPDDPEGETKITADGDLLGGREFLVRTFTLTEKGNRKFMLATEPARIVGFRDSYLFFQTHPNLYKFILNQTQKNDLIDRGVLPYSYRNRQIALVTARGVFKEFGAKIIRGGKHITDDYYASELRTKGNVIEGKLAGDPIDKSARALETMMYPASENGINPAKNQVEFFEHRPHGHMSNSNIIASGSKLSSTNWLYQHSAACSRFNSDLFYDRVKVLLVDQQGLRDAYTNILHIPESTQSTTVLGWRRSKNDSPSDTSIVYETVIHDNDLNKPKTGLSEIPKEIYEDVVDEDVLRAITEQQNFEKCNEYI.

The tract at residues 1–97 (MSDSEGGLAS…DKGVTRSRNR (97 aa)) is disordered. The segment covering 30-66 (DTEDLDIDENDENEDDDYREEEANEGVNEEEISDEEE) has biased composition (acidic residues). S86 is subject to Phosphoserine. Positions 248-435 (ELRTKGNVIE…QNFEKCNEYI (188 aa)) are functional region; able to complement all NPL6 null allele phenotypes.

It belongs to the RSC7/SWP82 family. RSC7 subfamily. As to quaternary structure, interacts with ARP7, ARP9, RSC3, RSC8, RSC30 and STH1. Component of the two forms of the RSC complex composed of at least either RSC1 or RSC2, and ARP7, ARP9, LDB7, NPL6, RSC3, RSC30, RSC4, RSC58, RSC6, RSC8, RSC9, SFH1, STH1, HTL1 and probably RTT102. The complexes interact with histone and histone variant components of centromeric chromatin. Component of a fungal-specific module (HTL1-LDB7-NPL6-RSC3-RSC30) within the RSC complex.

Its subcellular location is the nucleus. Its function is as follows. Component of the chromatin structure remodeling complex (RSC), which is involved in transcription regulation and nucleosome positioning. RSC is responsible for the transfer of a histone octamer from a nucleosome core particle to naked DNA. The reaction requires ATP and involves an activated RSC-nucleosome intermediate. Remodeling reaction also involves DNA translocation, DNA twist and conformational change. As a reconfigurer of centromeric and flanking nucleosomes, RSC complex is required both for proper kinetochore function in chromosome segregation and, via a PKC1-dependent signaling pathway, for organization of the cellular cytoskeleton. Together with HTL1, LDB7, RSC3, RSC30 components, defines a fungal-specific module within the RSC complex that plays a role in many cellular functions including the maintenance of cell wall integrity. Acidic protein important for nuclear protein localization. The sequence is that of Chromatin structure-remodeling complex subunit RSC7 (NPL6) from Saccharomyces cerevisiae (strain ATCC 204508 / S288c) (Baker's yeast).